The sequence spans 434 residues: 3-phosphoshikimate 1-carboxyvinyltransferase (434 aa).

Positions 15, 16, and 20 each coordinate 3-phosphoshikimate. Residue Lys-15 coordinates phosphoenolpyruvate. Phosphoenolpyruvate-binding residues include Gly-96 and Arg-124. Residues Ser-169, Gln-171, Ser-195, Asp-319, and Lys-346 each contribute to the 3-phosphoshikimate site. Phosphoenolpyruvate is bound at residue Gln-171. Asp-319 functions as the Proton acceptor in the catalytic mechanism. Phosphoenolpyruvate-binding residues include Arg-350 and Arg-394.

It belongs to the EPSP synthase family. In terms of assembly, monomer.

It localises to the cytoplasm. The catalysed reaction is 3-phosphoshikimate + phosphoenolpyruvate = 5-O-(1-carboxyvinyl)-3-phosphoshikimate + phosphate. It functions in the pathway metabolic intermediate biosynthesis; chorismate biosynthesis; chorismate from D-erythrose 4-phosphate and phosphoenolpyruvate: step 6/7. Functionally, catalyzes the transfer of the enolpyruvyl moiety of phosphoenolpyruvate (PEP) to the 5-hydroxyl of shikimate-3-phosphate (S3P) to produce enolpyruvyl shikimate-3-phosphate and inorganic phosphate. This Prosthecochloris aestuarii (strain DSM 271 / SK 413) protein is 3-phosphoshikimate 1-carboxyvinyltransferase.